We begin with the raw amino-acid sequence, 217 residues long: uncharacterized protein (217 aa).

Residues 26 to 48 (VFMRGYVVGLVLALMLVTAPAMA) traverse the membrane as a helical segment.

It localises to the membrane. This is an uncharacterized protein from Archaeoglobus fulgidus (strain ATCC 49558 / DSM 4304 / JCM 9628 / NBRC 100126 / VC-16).